Consider the following 319-residue polypeptide: Acetyl-coenzyme A carboxylase carboxyl transferase subunit alpha (319 aa).

Residues 36-293 (EVERLKTKLE…HDAFLSELDR (258 aa)) form the CoA carboxyltransferase C-terminal domain.

The protein belongs to the AccA family. In terms of assembly, acetyl-CoA carboxylase is a heterohexamer composed of biotin carboxyl carrier protein (AccB), biotin carboxylase (AccC) and two subunits each of ACCase subunit alpha (AccA) and ACCase subunit beta (AccD).

It is found in the cytoplasm. It catalyses the reaction N(6)-carboxybiotinyl-L-lysyl-[protein] + acetyl-CoA = N(6)-biotinyl-L-lysyl-[protein] + malonyl-CoA. It functions in the pathway lipid metabolism; malonyl-CoA biosynthesis; malonyl-CoA from acetyl-CoA: step 1/1. Component of the acetyl coenzyme A carboxylase (ACC) complex. First, biotin carboxylase catalyzes the carboxylation of biotin on its carrier protein (BCCP) and then the CO(2) group is transferred by the carboxyltransferase to acetyl-CoA to form malonyl-CoA. The protein is Acetyl-coenzyme A carboxylase carboxyl transferase subunit alpha of Dichelobacter nodosus (strain VCS1703A).